Reading from the N-terminus, the 197-residue chain is Casparian strip membrane protein 3 (197 aa).

Over 1–35 the chain is Cytoplasmic; it reads MSARVDIPADTSAAAKGTAPLIAASTHVKGGYKKG. The chain crosses the membrane as a helical span at residues 36–56; that stretch reads LAIFDLVLRLGAVVTALAAAA. At 57–85 the chain is on the extracellular side; the sequence is TMGTTDQTLPFFTQFFQFQASYDDLPTFQ. A helical membrane pass occupies residues 86 to 106; that stretch reads FFVIAMAIVSGYLVLSLPFSI. Over 107–119 the chain is Cytoplasmic; sequence VAIIRPHATGPRL. Residues 120 to 140 form a helical membrane-spanning segment; the sequence is LLIILDTVALTLNTAAAAAAV. Residues 141–171 are Extracellular-facing; it reads AIVDLAQNGNSSANWLGICQQFGDFCQKASG. Asn150 carries an N-linked (GlcNAc...) asparagine glycan. The helical transmembrane segment at 172-192 threads the bilayer; it reads AVVASFIAAGVLLFLIVISAL. Topologically, residues 193–197 are cytoplasmic; the sequence is ALRKR.

The protein belongs to the Casparian strip membrane proteins (CASP) family. Homodimer and heterodimers.

The protein localises to the cell membrane. Functionally, regulates membrane-cell wall junctions and localized cell wall deposition. Required for establishment of the Casparian strip membrane domain (CSD) and the subsequent formation of Casparian strips, a cell wall modification of the root endodermis that determines an apoplastic barrier between the intraorganismal apoplasm and the extraorganismal apoplasm and prevents lateral diffusion. This Populus trichocarpa (Western balsam poplar) protein is Casparian strip membrane protein 3.